A 1499-amino-acid chain; its full sequence is ABC multidrug transporter A-2 (1499 aa).

Disordered regions lie at residues 1–66 and 80–107; these read MAMQ…IDQE and QISQ…NSDK. Positions 16–30 are enriched in polar residues; sequence ISSSAGQEVASTIRR. Residues 31–51 are compositionally biased toward basic and acidic residues; the sequence is QFTDADADRIVETPLGEKADS. Polar residues predominate over residues 80 to 94; the sequence is QISQKSAGPTNTFLD. Positions 166-415 constitute an ABC transporter 1 domain; the sequence is LRSILGCRNR…FIDMGFDCPD (250 aa). Asparagine 339 carries an N-linked (GlcNAc...) asparagine glycan. The next 5 membrane-spanning stretches (helical) occupy residues 526-546, 561-581, 606-626, 635-655, and 669-689; these read MTLA…SVFY, LLFF…LTLW, MIVD…ILYF, GHFF…SNIF, and MVPS…TIPV. N-linked (GlcNAc...) asparagine glycosylation occurs at asparagine 763. A helical membrane pass occupies residues 778-798; sequence GIILGFFFFFLAAYIICSELV. An ABC transporter 2 domain is found at 857 to 1100; sequence FHWQDVCYDI…LIKYFENKGS (244 aa). 893–900 serves as a coordination point for ATP; it reads GVTGAGKT. The next 5 helical transmembrane spans lie at 1193-1213, 1227-1247, 1268-1288, 1317-1337, and 1353-1373; these read YIYS…FTFW, FAIF…MPYF, AFML…AVPA, LLIL…IAGI, and LCLI…FWIF. A glycan (N-linked (GlcNAc...) asparagine) is linked at asparagine 1414. A helical membrane pass occupies residues 1466 to 1486; the sequence is GLLFVYIVFNIFAAIFLYWLI.

This sequence belongs to the ABC transporter superfamily. ABCG family. PDR (TC 3.A.1.205) subfamily.

It localises to the cell membrane. The catalysed reaction is itraconazole(in) + ATP + H2O = itraconazole(out) + ADP + phosphate + H(+). The enzyme catalyses voriconazole(in) + ATP + H2O = voriconazole(out) + ADP + phosphate + H(+). With respect to regulation, the efflux inhibitor FK506 impairs the transport activity. Its function is as follows. Pleiotropic ABC efflux transporter that confers resistance to structurally and functionally unrelated compounds including azoles such as itraconazole, posaconazole, and voriconazole. This chain is ABC multidrug transporter A-2, found in Aspergillus fumigatus (strain ATCC MYA-4609 / CBS 101355 / FGSC A1100 / Af293) (Neosartorya fumigata).